Here is a 571-residue protein sequence, read N- to C-terminus: uncharacterized protein (571 aa).

The next 5 helical transmembrane spans lie at 10-29 (VRLH…HFIG), 36-55 (VSLG…GLLF), 65-87 (WAFF…FASL), 96-118 (ALAV…LFRF), and 166-188 (ATTY…PRLL). The 85-residue stretch at 294–378 (TEVDDQELLS…IATAARNLGF (85 aa)) folds into the RCK C-terminal domain. 6 helical membrane-spanning segments follow: residues 388–406 (LVYL…LLQV), 411–433 (VPLG…WLYS), 446–465 (LRLL…GLAA), 480–502 (LFAK…GLLL), 509–531 (LPPV…LNAL), and 546–568 (VPFA…CAVA).

It belongs to the AAE transporter (TC 2.A.81) family.

It is found in the cell membrane. This is an uncharacterized protein from Bordetella parapertussis (strain 12822 / ATCC BAA-587 / NCTC 13253).